Reading from the N-terminus, the 490-residue chain is Interferon-induced protein with tetratricopeptide repeats 3 (490 aa).

TPR repeat units follow at residues Ala51–Glu84, Leu94–Phe127, Ser136–Asn169, Phe172–Asn206, Gln207–Gln240, Thr241–Asn274, Pro415–Asp448, and Pro450–Glu481. Ser203 and Ser237 each carry phosphoserine. Residues Ser467–Asn490 are disordered. The segment covering Ala474–Asn490 has biased composition (polar residues). A Phosphoserine modification is found at Ser478.

It belongs to the IFIT family. In terms of assembly, component of an interferon-dependent multiprotein complex, at least composed of IFIT1, IFIT2 and IFIT3. Interacts with IFIT1 and IFIT2. Interacts (via N-terminus) with MAVS, TBK1, TRAF6 and RIGI. Interacts with COPS5. In terms of tissue distribution, expression significantly higher in peripheral blood mononuclear cells (PBMCs) and monocytes from systemic lupus erythematosus (SLE) patients than in those from healthy individuals (at protein level). Spleen, lung, leukocytes, lymph nodes, placenta, bone marrow and fetal liver.

The protein localises to the cytoplasm. It localises to the mitochondrion. In terms of biological role, IFN-induced antiviral protein which acts as an inhibitor of cellular as well as viral processes, cell migration, proliferation, signaling, and viral replication. Enhances MAVS-mediated host antiviral responses by serving as an adapter bridging TBK1 to MAVS which leads to the activation of TBK1 and phosphorylation of IRF3 and phosphorylated IRF3 translocates into nucleus to promote antiviral gene transcription. Exhibits an antiproliferative activity via the up-regulation of cell cycle negative regulators CDKN1A/p21 and CDKN1B/p27. Normally, CDKN1B/p27 turnover is regulated by COPS5, which binds CDKN1B/p27 in the nucleus and exports it to the cytoplasm for ubiquitin-dependent degradation. IFIT3 sequesters COPS5 in the cytoplasm, thereby increasing nuclear CDKN1B/p27 protein levels. Up-regulates CDKN1A/p21 by down-regulating MYC, a repressor of CDKN1A/p21. Can negatively regulate the apoptotic effects of IFIT2. This is Interferon-induced protein with tetratricopeptide repeats 3 (IFIT3) from Homo sapiens (Human).